We begin with the raw amino-acid sequence, 692 residues long: Structure-specific endonuclease subunit SLX4 (692 aa).

Residues 39–59 (SDDEDQDEEQETEIPPEEGDD) form a disordered region.

It belongs to the SLX4 family. Forms a heterodimer with SLX1. Post-translationally, phosphorylated in response to DNA damage.

The protein localises to the nucleus. Functionally, regulatory subunit of the SLX1-SLX4 structure-specific endonuclease that resolves DNA secondary structures generated during DNA repair and recombination. Has endonuclease activity towards branched DNA substrates, introducing single-strand cuts in duplex DNA close to junctions with ss-DNA. The protein is Structure-specific endonuclease subunit SLX4 of Kluyveromyces lactis (strain ATCC 8585 / CBS 2359 / DSM 70799 / NBRC 1267 / NRRL Y-1140 / WM37) (Yeast).